A 718-amino-acid polypeptide reads, in one-letter code: Methionine--tRNA ligase (718 aa).

The 'HIGH' region signature appears at Pro-12–His-22. Cys-143, Cys-146, Cys-156, and Cys-159 together coordinate Zn(2+). The 'KMSKS' region signature appears at Lys-349–Ser-353. Lys-352 provides a ligand contact to ATP. Residues Ala-573–Thr-599 form a disordered region. One can recognise a tRNA-binding domain in the interval Asp-608–Lys-718.

The protein belongs to the class-I aminoacyl-tRNA synthetase family. MetG type 1 subfamily. Homodimer. The cofactor is Zn(2+).

Its subcellular location is the cytoplasm. The enzyme catalyses tRNA(Met) + L-methionine + ATP = L-methionyl-tRNA(Met) + AMP + diphosphate. Its function is as follows. Is required not only for elongation of protein synthesis but also for the initiation of all mRNA translation through initiator tRNA(fMet) aminoacylation. The polypeptide is Methionine--tRNA ligase (Aromatoleum aromaticum (strain DSM 19018 / LMG 30748 / EbN1) (Azoarcus sp. (strain EbN1))).